We begin with the raw amino-acid sequence, 1220 residues long: Plasma membrane calcium-transporting ATPase 1 (1220 aa).

At G2 the chain carries N-acetylglycine. Residues 2–105 are Cytoplasmic-facing; it reads GDMANNSVAY…KTFLQLVWEA (104 aa). Phosphoserine occurs at positions 8 and 17. The chain crosses the membrane as a helical span at residues 106 to 126; it reads LQDVTLIILEIAAIVSLGLSF. The Extracellular portion of the chain corresponds to 127–154; sequence YQPPEGDNALCGEVSVGEEEGEGETGWI. The helical transmembrane segment at 155–175 threads the bilayer; it reads EGAAILLSVVCVVLVTAFNDW. Residues 176-366 lie on the Cytoplasmic side of the membrane; sequence SKEKQFRGLQ…KEKSVLQGKL (191 aa). Residues 297 to 356 are disordered; sequence EEEKKDEKKKEKKNKKQDGAIENRNKAKAQDGAAMEMQPLKSEEGGDGDEKDKKKANLPK. Basic and acidic residues-rich tracts occupy residues 312-325 and 337-356; these read KQDG…KAKA and KSEE…NLPK. S338 bears the Phosphoserine mark. A helical transmembrane segment spans residues 367–386; sequence TKLAVQIGKAGLLMSAITVI. Residues 387-418 are Extracellular-facing; sequence ILVLYFVIDTFWVQKRPWLAECTPIYIQYFVK. Residues 419–439 form a helical membrane-spanning segment; that stretch reads FFIIGVTVLVVAVPEGLPLAV. At 440-855 the chain is on the cytoplasmic side; sequence TISLAYSVKK…RNVYDSISKF (416 aa). D475 (4-aspartylphosphate intermediate) is an active-site residue. Mg(2+)-binding residues include D475, T477, and D797. Residues 856–876 form a helical membrane-spanning segment; it reads LQFQLTVNVVAVIVAFTGACI. Residues 877-882 are Extracellular-facing; the sequence is TQDSPL. Residues 883-903 traverse the membrane as a helical segment; sequence KAVQMLWVNLIMDTLASLALA. The Cytoplasmic segment spans residues 904 to 927; that stretch reads TEPPTESLLLRKPYGRNKPLISRT. Residues 928–948 traverse the membrane as a helical segment; the sequence is MMKNILGHAFYQLVVVFTLLF. The Extracellular segment spans residues 949 to 971; that stretch reads AGEKFFDIDSGRNAPLHAPPSEH. The chain crosses the membrane as a helical span at residues 972 to 991; that stretch reads YTIVFNTFVLMQLFNEINAR. Residues 992 to 1005 lie on the Cytoplasmic side of the membrane; the sequence is KIHGERNVFEGIFN. The chain crosses the membrane as a helical span at residues 1006-1027; the sequence is NAIFCTIVLGTFVVQIIIVQFG. At 1028–1039 the chain is on the extracellular side; sequence GKPFSCSELSIE. Residues 1040–1060 traverse the membrane as a helical segment; that stretch reads QWLWSIFLGMGTLLWGQLIST. The Cytoplasmic segment spans residues 1061 to 1220; that stretch reads IPTSRLKFLK…SPLHSLETSL (160 aa). Residues 1100 to 1117 are calmodulin-binding subdomain A; sequence LRRGQILWFRGLNRIQTQ. T1116 is modified (phosphothreonine; by PKC). The interval 1118-1220 is required for basolateral membrane targeting; it reads IRVVNAFRSS…SPLHSLETSL (103 aa). S1140 and S1155 each carry phosphoserine. A disordered region spans residues 1160–1220; sequence PLIDDTDAED…SPLHSLETSL (61 aa). The residue at position 1165 (T1165) is a Phosphothreonine. Position 1178 is a phosphoserine; by PKA (S1178). S1182 carries the post-translational modification Phosphoserine. Positions 1200-1220 are enriched in polar residues; that stretch reads MNKSATSSSPGSPLHSLETSL.

It belongs to the cation transport ATPase (P-type) (TC 3.A.3) family. Type IIB subfamily. As to quaternary structure, monomer. Dimer. Oligomer. Calmodulin binding. Interacts with PDZD11. Interacts with SLC35G1 and STIM1; inhibits calcium-transporting ATPase activity after store depletion. Interacts with YWHAE; interacts with the monomeric and dimeric forms of the YWHAE but prefer the monomer form; this interaction inhibits calcium-transporting ATPase activity. Interacts with NPTN; this interaction stabilizes ATP2B1 and increases ATPase activity; this interaction controls T cell calcium homeostasis following T cell activation. Interacts with EPB41; regulates small intestinal calcium absorption through regulation of membrane expression of ATP2B1. As to expression, isoform B: Ubiquitously expressed. Isoform C: Found in brain cortex, skeletal muscle and heart muscle. Isoform D: Has only been found in fetal skeletal muscle. Isoform K: Found in small intestine and liver. Abundantly expressed in the endometrial epithelial cells and glandular epithelial cells in early-proliferative phase and early-secretory phases.

The protein localises to the cell membrane. It is found in the basolateral cell membrane. Its subcellular location is the synapse. The protein resides in the presynaptic cell membrane. It localises to the cytoplasmic vesicle. The protein localises to the secretory vesicle. It is found in the synaptic vesicle membrane. It carries out the reaction Ca(2+)(in) + ATP + H2O = Ca(2+)(out) + ADP + phosphate + H(+). Catalyzes the hydrolysis of ATP coupled with the transport of calcium from the cytoplasm to the extracellular space thereby maintaining intracellular calcium homeostasis. Plays a role in blood pressure regulation through regulation of intracellular calcium concentration and nitric oxide production leading to regulation of vascular smooth muscle cells vasoconstriction. Positively regulates bone mineralization through absorption of calcium from the intestine. Plays dual roles in osteoclast differentiation and survival by regulating RANKL-induced calcium oscillations in preosteoclasts and mediating calcium extrusion in mature osteoclasts. Regulates insulin sensitivity through calcium/calmodulin signaling pathway by regulating AKT1 activation and NOS3 activation in endothelial cells. May play a role in synaptic transmission by modulating calcium and proton dynamics at the synaptic vesicles. This is Plasma membrane calcium-transporting ATPase 1 from Homo sapiens (Human).